Consider the following 278-residue polypeptide: Potassium/proton antiporter CemA (278 aa).

The next 4 membrane-spanning stretches (helical) occupy residues 61-81 (VVFL…FLFG), 154-174 (CAIT…SILI), 203-223 (IILF…EVII), and 238-258 (FIFV…KYWI).

The protein belongs to the CemA family.

The protein resides in the plastid. Its subcellular location is the chloroplast inner membrane. It carries out the reaction K(+)(in) + H(+)(out) = K(+)(out) + H(+)(in). Contributes to K(+)/H(+) antiport activity by supporting proton efflux to control proton extrusion and homeostasis in chloroplasts in a light-dependent manner to modulate photosynthesis. Prevents excessive induction of non-photochemical quenching (NPQ) under continuous-light conditions. Indirectly promotes efficient inorganic carbon uptake into chloroplasts. This is Potassium/proton antiporter CemA from Gracilaria tenuistipitata var. liui (Red alga).